Consider the following 29-residue polypeptide: Cyclotide mden-A (29 aa).

A cross-link (cyclopeptide (Gly-Asn)) is located at residues 1-29 (GIPTCGETCTLGTCNTPGCTCSWPICTKN). Cystine bridges form between Cys-5-Cys-19, Cys-9-Cys-21, and Cys-14-Cys-26.

The protein belongs to the cyclotide family. Moebius subfamily. Post-translationally, this is a cyclic peptide.

Probably participates in a plant defense mechanism. The polypeptide is Cyclotide mden-A (Melicytus dentatus (Tree violet)).